The following is a 360-amino-acid chain: DNA replication and repair protein RecF (360 aa).

30–37 (GDNAQGKT) contributes to the ATP binding site.

The protein belongs to the RecF family.

It is found in the cytoplasm. Functionally, the RecF protein is involved in DNA metabolism; it is required for DNA replication and normal SOS inducibility. RecF binds preferentially to single-stranded, linear DNA. It also seems to bind ATP. This chain is DNA replication and repair protein RecF, found in Lachnoclostridium phytofermentans (strain ATCC 700394 / DSM 18823 / ISDg) (Clostridium phytofermentans).